Here is a 756-residue protein sequence, read N- to C-terminus: MGGRMPLLNVSPLKWPISLKIPAMTVCVAVLSCTTVATFAGITSVATTRSLIEKHLNYVAISMRDALLTKLQATKFEVEGLSANPGLLQLFNNTSVGFAAVSPTDLTAASVDKVESGKFSLAATPTTKFYVDNYQKLDAWLKPLAAKQSYSGILLANAEGAIIYSTGTNPVGPVDANGSINLAIASSANSQEAVMTDFTPPTLSAPGQALYAVAIVHPFIPDKRNGTLLISMSTEMLNAVMGQAKGFGPHSEALIAGSDGKPRSLSSISRDEDAEAVVNSDLLSQGIKTSNFGAQEVLSASQQLKWQDHQWSIIALEPEADVVSASTAMLIKIIGITAATAILALAMAILASRSISGPLAGLVSIMKRLANGDINVRVAGVDRRDEMGEMSRAVLVFRDNAIARVAAEDDARSAEEAMEHDRRMMEMERSERLDEQARVMAQIGGGLAALSDGVFSRPITVDFPEEYRPLKSDFNRALGQLRETIRTVAAQAASMSSIVSEISCATDVLAKRTEHQAIVLDGAVNTMDAISNDVSVTANAANNADALVRDAHSAAAASDEIVSSAIAGMLEIEESSAKIATIVSVIEEIAHQTNLLALNAGVEASRAGEAGKGFAVVASEVRALAQRSSDAAKEIKDLINVSTQRVERGKELVDSASELLKHIAARVDLIRTTVSNIAATATSQAKHLSEFQTTIAEIDQSTQQTAAMAEESDAACRSLNAEAQHLLELIQQFELGGGSSTRQPQSPPTQRYFMSR.

The next 2 membrane-spanning stretches (helical) occupy residues 26–46 (VCVA…TSVA) and 330–350 (LIKI…MAIL). 2 HAMP domains span residues 353–406 (RSIS…ARVA) and 434–486 (DEQA…ETIR). The Methyl-accepting transducer domain maps to 491–720 (QAASMSSIVS…ESDAACRSLN (230 aa)). A disordered region spans residues 736-756 (GGGSSTRQPQSPPTQRYFMSR).

It belongs to the methyl-accepting chemotaxis (MCP) protein family.

The protein resides in the cell membrane. Functionally, chemotactic-signal transducers respond to changes in the concentration of attractants and repellents in the environment, transduce a signal from the outside to the inside of the cell, and facilitate sensory adaptation through the variation of the level of methylation. Attractants increase the level of methylation while repellents decrease the level of methylation. This chain is Probable chemoreceptor y4sI, found in Sinorhizobium fredii (strain NBRC 101917 / NGR234).